Reading from the N-terminus, the 332-residue chain is Ketol-acid reductoisomerase (NADP(+)) (332 aa).

Residues 2–182 (AKVYIDKDAS…GATRAGVIET (181 aa)) enclose the KARI N-terminal Rossmann domain. Residues 25 to 28 (YGSQ), S53, and 83 to 86 (DMVQ) each bind NADP(+). The active site involves H108. G134 serves as a coordination point for NADP(+). Residues 183-328 (TFKEETETDL…RQIREISLRG (146 aa)) enclose the KARI C-terminal knotted domain. The Mg(2+) site is built by D191, E195, E227, and E231. S252 provides a ligand contact to substrate.

Belongs to the ketol-acid reductoisomerase family. It depends on Mg(2+) as a cofactor.

It catalyses the reaction (2R)-2,3-dihydroxy-3-methylbutanoate + NADP(+) = (2S)-2-acetolactate + NADPH + H(+). It carries out the reaction (2R,3R)-2,3-dihydroxy-3-methylpentanoate + NADP(+) = (S)-2-ethyl-2-hydroxy-3-oxobutanoate + NADPH + H(+). The protein operates within amino-acid biosynthesis; L-isoleucine biosynthesis; L-isoleucine from 2-oxobutanoate: step 2/4. It functions in the pathway amino-acid biosynthesis; L-valine biosynthesis; L-valine from pyruvate: step 2/4. Involved in the biosynthesis of branched-chain amino acids (BCAA). Catalyzes an alkyl-migration followed by a ketol-acid reduction of (S)-2-acetolactate (S2AL) to yield (R)-2,3-dihydroxy-isovalerate. In the isomerase reaction, S2AL is rearranged via a Mg-dependent methyl migration to produce 3-hydroxy-3-methyl-2-ketobutyrate (HMKB). In the reductase reaction, this 2-ketoacid undergoes a metal-dependent reduction by NADPH to yield (R)-2,3-dihydroxy-isovalerate. The polypeptide is Ketol-acid reductoisomerase (NADP(+)) (Sulfurisphaera tokodaii (strain DSM 16993 / JCM 10545 / NBRC 100140 / 7) (Sulfolobus tokodaii)).